A 750-amino-acid polypeptide reads, in one-letter code: GTP pyrophosphokinase rsh (750 aa).

Positions 45–144 constitute an HD domain; it reads YFSHPLEVAA…VKLADRLHNM (100 aa). The region spanning 390–451 is the TGS domain; that stretch reads DQVFCFTPKG…KNGDEVDIIR (62 aa). Residues 587 to 613 are disordered; that stretch reads AAKVDPAATTPKPGKRALPIRGTNPDL. Residues 676–750 form the ACT domain; that stretch reads RISVSAINSP…SVSSAKRVNG (75 aa).

The protein belongs to the RelA/SpoT family.

The catalysed reaction is GTP + ATP = guanosine 3'-diphosphate 5'-triphosphate + AMP. Functions as a (p)ppGpp synthase. In eubacteria ppGpp (guanosine 3'-diphosphate 5'-diphosphate) is a mediator of the stringent response that coordinates a variety of cellular activities in response to changes in nutritional abundance. Plays a role in adaptation of Brucella to its intracellular host environment. This is GTP pyrophosphokinase rsh (rsh) from Brucella abortus (strain 2308).